Here is a 634-residue protein sequence, read N- to C-terminus: Dynein axonemal assembly factor 1 (634 aa).

The disordered stretch occupies residues 1-80 (MHPEVSEPPV…SRDDREDRGP (80 aa)). A compositionally biased stretch (basic and acidic residues) spans 22–42 (AGDHGDAGPGIRKEEISETKE). A compositionally biased stretch (polar residues) spans 48-62 (CTTSCPSQQQPSGDN). Residues 70–80 (HSRDDREDRGP) are compositionally biased toward basic and acidic residues. 6 LRR repeats span residues 101–123 (ALND…EEYT), 124–145 (GLRC…QAQS), 146–167 (ELRC…EPLQ), 168–189 (KLDA…SCLP), 190–211 (VLNT…EHLR), and 215–236 (RLCV…SVLE). One can recognise an LRRCT domain in the interval 249–288 (NPVTKHIPNYRRTVTVRLKHLTYLDDRPVFPKDRACAEAW). Basic and acidic residues predominate over residues 326 to 336 (EERKKARDRGE). The segment at 326–358 (EERKKARDRGETPLPDSEGSIPTSPEAEEKQPM) is disordered. The residue at position 349 (S349) is a Phosphoserine. T462 is modified (phosphothreonine). A phosphoserine mark is found at S465 and S488. 2 disordered regions span residues 481–505 (ISSL…ATPT) and 559–634 (ELND…FGLD).

The protein belongs to the DNAAF1 family.

The protein resides in the cell projection. Its subcellular location is the cilium. Functionally, cilium-specific protein required for the stability of the ciliary architecture. Plays a role in cytoplasmic preassembly of dynein arms. Involved in regulation of microtubule-based cilia and actin-based brush border microvilli. The sequence is that of Dynein axonemal assembly factor 1 (Dnaaf1) from Mus musculus (Mouse).